A 572-amino-acid polypeptide reads, in one-letter code: Phosphoenolpyruvate-protein phosphotransferase (572 aa).

His-190 acts as the Tele-phosphohistidine intermediate in catalysis. Phosphoenolpyruvate contacts are provided by Arg-297 and Arg-333. Glu-427 and Asp-451 together coordinate Mg(2+). Phosphoenolpyruvate-binding positions include 450–451 (ND) and Arg-461. Residue Cys-498 is the Proton donor of the active site.

This sequence belongs to the PEP-utilizing enzyme family. Homodimer. It depends on Mg(2+) as a cofactor.

It is found in the cytoplasm. The enzyme catalyses L-histidyl-[protein] + phosphoenolpyruvate = N(pros)-phospho-L-histidyl-[protein] + pyruvate. General (non sugar-specific) component of the phosphoenolpyruvate-dependent sugar phosphotransferase system (sugar PTS). This major carbohydrate active-transport system catalyzes the phosphorylation of incoming sugar substrates concomitantly with their translocation across the cell membrane. Enzyme I transfers the phosphoryl group from phosphoenolpyruvate (PEP) to the phosphoryl carrier protein (HPr). The polypeptide is Phosphoenolpyruvate-protein phosphotransferase (ptsI) (Mycoplasma genitalium (strain ATCC 33530 / DSM 19775 / NCTC 10195 / G37) (Mycoplasmoides genitalium)).